The following is a 360-amino-acid chain: Replication-associated protein (360 aa).

Positions 11–114 constitute a CRESS-DNA virus Rep endonuclease domain; sequence SHRNANTFLT…PLAVFERGTF (104 aa). Residues 18–21 carry the RCR-1 motif; the sequence is FLTY. The a divalent metal cation site is built by Glu52, His60, and His62. The RCR-2 signature appears at 60 to 62; sequence HLH. The active-site For DNA cleavage activity is Tyr100. The RCR-3 motif lies at 100 to 103; sequence YILK. A divalent metal cation is bound at residue Glu104. An oligomerization region spans residues 175 to 187; the sequence is SANKLFPEIQEEF. 229-236 is an ATP binding site; the sequence is GPTRTGKS. Positions 252-270 are transactivation; that stretch reads VDWSSYNEDAIYNIVDDIP. The Nuclear localization signal signature appears at 292–303; that stretch reads KYGKKKKVQKKS.

Belongs to the geminiviridae Rep protein family. Homooligomer. Rep binds to repeated DNA motifs (iterons). Forms the O-complex, which is a Rep-DNA complex involved in the initiation of RCR. Part of the C- and V-complexes which are RepA-Rep-DNA complexes involved in the c-sense and v-sense transcription. Requires Mg(2+) as cofactor. It depends on Mn(2+) as a cofactor.

The protein resides in the host nucleus. Essential for the replication of viral ssDNA. The closed circular ssDNA genome is first converted to a superhelical dsDNA. Rep binds a specific region at the genome origin of replication. It introduces an endonucleolytic nick within the conserved sequence 5'-TAATATTAC-3' in the intergenic region of the genome present in all geminiviruses, thereby initiating the rolling circle replication (RCR). Following cleavage, binds covalently to the 5'-phosphate of DNA as a tyrosyl ester. The cleavage gives rise to a free 3'-OH that serves as a primer for the cellular DNA polymerase. The polymerase synthesizes the (+) strand DNA by rolling circle mechanism. After one round of replication, a Rep-catalyzed nucleotidyl transfer reaction releases a circular single-stranded virus genome, thereby terminating the replication. Displays origin-specific DNA cleavage, nucleotidyl transferase, ATPase and helicase activities. Acts as an inhibitor of C-sense gene transcription. The chain is Replication-associated protein from Avena sativa (Oat).